A 161-amino-acid chain; its full sequence is Putative pre-16S rRNA nuclease (161 aa).

This sequence belongs to the YqgF nuclease family.

It is found in the cytoplasm. Could be a nuclease involved in processing of the 5'-end of pre-16S rRNA. This is Putative pre-16S rRNA nuclease from Bartonella bacilliformis (strain ATCC 35685 / KC583 / Herrer 020/F12,63).